The sequence spans 357 residues: MQLSDFSFDLPKSLISFHPYFIRSTCRLMVMYGHTGMIFHKRFFNIIDEINSGDLIILNNTQVIPARFFGKKESGGKVEVLVEKILGINNILASIKNSKNINIGSKIFFGYKDKIKGSVVDCKNSFFEIFFHDNIDSAIDIINNIGEIPLPPYIKRFRNKLDVDLYQTVYKKKTGSIAAPTAGLHFDLPLLEALHNKGVDIDYITLHIGSGTFQPIRRVQIEEHIMHSESVEVSSSVIQKIKSCKKKGGRIIAVGTSTLRALESAYHSSEWSDSKDFISDTNIFIYPGYKHNIVDALITNFHFPESTLIMLVCSFLGYKNTMNAYNTAIVNKYSFFSYGDAMYITHNKLAPYENFII.

The protein belongs to the QueA family. In terms of assembly, monomer.

Its subcellular location is the cytoplasm. The enzyme catalyses 7-aminomethyl-7-carbaguanosine(34) in tRNA + S-adenosyl-L-methionine = epoxyqueuosine(34) in tRNA + adenine + L-methionine + 2 H(+). Its pathway is tRNA modification; tRNA-queuosine biosynthesis. In terms of biological role, transfers and isomerizes the ribose moiety from AdoMet to the 7-aminomethyl group of 7-deazaguanine (preQ1-tRNA) to give epoxyqueuosine (oQ-tRNA). This is S-adenosylmethionine:tRNA ribosyltransferase-isomerase from Buchnera aphidicola subsp. Acyrthosiphon pisum (strain Tuc7).